The chain runs to 143 residues: Large ribosomal subunit protein uL15 (143 aa).

Composition is skewed to basic residues over residues 1-14 (MIRKSKKITKKRGS) and 23-38 (KKHRGAGHRGGRGNAG). Residues 1–38 (MIRKSKKITKKRGSRTCGYGEAKKHRGAGHRGGRGNAG) form a disordered region.

It belongs to the universal ribosomal protein uL15 family. Part of the 50S ribosomal subunit.

In terms of biological role, binds to the 23S rRNA. This is Large ribosomal subunit protein uL15 from Methanococcus maripaludis (strain DSM 14266 / JCM 13030 / NBRC 101832 / S2 / LL).